Here is a 311-residue protein sequence, read N- to C-terminus: ATP synthase subunit a (311 aa).

6 helical membrane-spanning segments follow: residues 62–82 (AVHV…GFFM), 123–143 (VAPM…MDLI), 179–199 (VTVF…WGFI), 213–233 (FWYF…VALI), 253–273 (IFIL…LGGI), and 276–296 (FGWA…FMVL).

Belongs to the ATPase A chain family. In terms of assembly, F-type ATPases have 2 components, CF(1) - the catalytic core - and CF(0) - the membrane proton channel. CF(1) has five subunits: alpha(3), beta(3), gamma(1), delta(1), epsilon(1). CF(0) has three main subunits: a(1), b(2) and c(9-12). The alpha and beta chains form an alternating ring which encloses part of the gamma chain. CF(1) is attached to CF(0) by a central stalk formed by the gamma and epsilon chains, while a peripheral stalk is formed by the delta and b chains.

The protein resides in the cell inner membrane. Its function is as follows. Key component of the proton channel; it plays a direct role in the translocation of protons across the membrane. This chain is ATP synthase subunit a, found in Teredinibacter turnerae (strain ATCC 39867 / T7901).